Reading from the N-terminus, the 397-residue chain is Elongation factor Tu (397 aa).

In terms of domain architecture, tr-type G spans 10–207 (KPHVNVGTIG…TLDTYIPEPV (198 aa)). The segment at 19–26 (GHVDHGKT) is G1. 19-26 (GHVDHGKT) lines the GTP pocket. Residue Thr26 participates in Mg(2+) binding. The interval 60–64 (GITIN) is G2. The G3 stretch occupies residues 81–84 (DCPG). GTP is bound by residues 81 to 85 (DCPGH) and 136 to 139 (NKAD). A G4 region spans residues 136–139 (NKAD). The tract at residues 174-176 (SAL) is G5.

The protein belongs to the TRAFAC class translation factor GTPase superfamily. Classic translation factor GTPase family. EF-Tu/EF-1A subfamily. In terms of assembly, monomer.

Its subcellular location is the cytoplasm. It carries out the reaction GTP + H2O = GDP + phosphate + H(+). Its function is as follows. GTP hydrolase that promotes the GTP-dependent binding of aminoacyl-tRNA to the A-site of ribosomes during protein biosynthesis. This Ectopseudomonas mendocina (strain ymp) (Pseudomonas mendocina) protein is Elongation factor Tu.